Reading from the N-terminus, the 223-residue chain is Small ribosomal subunit protein uS3 (223 aa).

Residues 39-115 form the KH type-2 domain; sequence IRKYIEKNLA…RVFINIVEIK (77 aa).

Belongs to the universal ribosomal protein uS3 family. Part of the 30S ribosomal subunit. Forms a tight complex with proteins S10 and S14.

In terms of biological role, binds the lower part of the 30S subunit head. Binds mRNA in the 70S ribosome, positioning it for translation. The chain is Small ribosomal subunit protein uS3 from Leuconostoc mesenteroides subsp. mesenteroides (strain ATCC 8293 / DSM 20343 / BCRC 11652 / CCM 1803 / JCM 6124 / NCDO 523 / NBRC 100496 / NCIMB 8023 / NCTC 12954 / NRRL B-1118 / 37Y).